Here is a 262-residue protein sequence, read N- to C-terminus: Protein NEGATIVE GRAVITROPIC RESPONSE OF ROOTS (262 aa).

The disordered stretch occupies residues 1–40 (MKFFNWMQNKLGGKQENRKSNTSTSTTYAKPEPREEFSDW). Residues 43–49 (SLLAIGT) carry the IGT motif motif.

The protein belongs to the LAZY family.

Involved in the control of root gravitropism. This is Protein NEGATIVE GRAVITROPIC RESPONSE OF ROOTS from Medicago truncatula (Barrel medic).